The primary structure comprises 650 residues: Macrolide export ATP-binding/permease protein MacB (650 aa).

The ABC transporter domain maps to I9 to A248. ATP is bound at residue G45–S52. 4 helical membrane passes run A276–G296, L525–M545, A580–L600, and P615–A635.

This sequence belongs to the ABC transporter superfamily. Macrolide exporter (TC 3.A.1.122) family. As to quaternary structure, homodimer.

It localises to the cell inner membrane. Its function is as follows. Non-canonical ABC transporter that contains transmembrane domains (TMD), which form a pore in the inner membrane, and an ATP-binding domain (NBD), which is responsible for energy generation. Confers resistance against macrolides. This Rhodospirillum rubrum (strain ATCC 11170 / ATH 1.1.1 / DSM 467 / LMG 4362 / NCIMB 8255 / S1) protein is Macrolide export ATP-binding/permease protein MacB.